Reading from the N-terminus, the 522-residue chain is Maturase K (522 aa).

This sequence belongs to the intron maturase 2 family. MatK subfamily.

It is found in the plastid. Its subcellular location is the chloroplast. In terms of biological role, usually encoded in the trnK tRNA gene intron. Probably assists in splicing its own and other chloroplast group II introns. The chain is Maturase K from Iris orientalis (Yellowband iris).